Consider the following 309-residue polypeptide: Probable lipid kinase YegS-like (309 aa).

In terms of domain architecture, DAGKc spans 1-134 (MAPSHWRLIL…IDLLRIDADH (134 aa)). Residues Thr-39, 65 to 71 (GDGTLSE), and Thr-96 contribute to the ATP site. Positions 219, 222, and 224 each coordinate Mg(2+). Glu-280 serves as the catalytic Proton acceptor.

It belongs to the diacylglycerol/lipid kinase family. YegS lipid kinase subfamily. The cofactor is Mg(2+). It depends on Ca(2+) as a cofactor.

It is found in the cytoplasm. Its function is as follows. Probably phosphorylates lipids; the in vivo substrate is unknown. This is Probable lipid kinase YegS-like from Xanthomonas campestris pv. campestris (strain 8004).